The following is a 127-amino-acid chain: Large ribosomal subunit protein bL20 (127 aa).

Belongs to the bacterial ribosomal protein bL20 family.

In terms of biological role, binds directly to 23S ribosomal RNA and is necessary for the in vitro assembly process of the 50S ribosomal subunit. It is not involved in the protein synthesizing functions of that subunit. The sequence is that of Large ribosomal subunit protein bL20 from Opitutus terrae (strain DSM 11246 / JCM 15787 / PB90-1).